Consider the following 316-residue polypeptide: Serine protease 45 (316 aa).

An N-terminal signal peptide occupies residues 1-38 (MAASLSRLSAGLAASRPLGLSRSFLLLVLLLLNSGYKG). Residues 49–290 (WWPKNLDLSR…YSRWIKKQIS (242 aa)) form the Peptidase S1 domain. Residues Cys74 and Cys90 are joined by a disulfide bond. His89 (charge relay system) is an active-site residue. Residue Asn110 is glycosylated (N-linked (GlcNAc...) asparagine). Asp137 functions as the Charge relay system in the catalytic mechanism. 2 N-linked (GlcNAc...) asparagine glycosylation sites follow: Asn162 and Asn186. 3 disulfides stabilise this stretch: Cys171/Cys248, Cys206/Cys229, and Cys238/Cys266. Residue Ser242 is the Charge relay system of the active site.

It belongs to the peptidase S1 family.

It localises to the secreted. The protein is Serine protease 45 (PRSS45) of Bos taurus (Bovine).